Reading from the N-terminus, the 257-residue chain is uncharacterized protein (257 aa).

The chain crosses the membrane as a helical span at residues 6 to 26 (IFWLNLAAIIIISIVVSGDMF).

The protein belongs to the staphylococcal tandem lipoprotein family.

Its subcellular location is the cell membrane. This is an uncharacterized protein from Staphylococcus aureus (strain COL).